Here is a 38-residue protein sequence, read N- to C-terminus: Potassium channel toxin alpha-KTx 3.7 (38 aa).

Cystine bridges form between Cys-8-Cys-28, Cys-14-Cys-33, and Cys-18-Cys-35.

Belongs to the short scorpion toxin superfamily. Potassium channel inhibitor family. Alpha-KTx 03 subfamily. As to expression, expressed by the venom gland.

It localises to the secreted. Blocks voltage-gated potassium channels Kv1.1/KCNA1 (IC(50)=0.6 nM), Kv1.2/KCNA2 (IC(50)=5.4 nM), Kv1.3/KCNA3 (IC(50)=0.014 nM) potently, and moderately block intermediate conductance calcium-activated potassium channels KCa3.1/KCNN4 (IC(50)=225 nM). Also shows activity on muscle-type nicotinic acetylcholine receptor (nAChR), since it reversibly and dose-dependently inhibits acetylcholine-induced current through mouse muscle-type nAChR heterologously expressed in Xenopus oocytes (IC(50)=1.6 uM). The chain is Potassium channel toxin alpha-KTx 3.7 from Orthochirus scrobiculosus (Central Asian scorpion).